A 260-amino-acid chain; its full sequence is Hydroxyethylthiazole kinase 1 (260 aa).

Met-39 contributes to the substrate binding site. The ATP site is built by Arg-115 and Thr-160. Position 187 (Gly-187) interacts with substrate.

It belongs to the Thz kinase family. It depends on Mg(2+) as a cofactor.

It catalyses the reaction 5-(2-hydroxyethyl)-4-methylthiazole + ATP = 4-methyl-5-(2-phosphooxyethyl)-thiazole + ADP + H(+). It participates in cofactor biosynthesis; thiamine diphosphate biosynthesis; 4-methyl-5-(2-phosphoethyl)-thiazole from 5-(2-hydroxyethyl)-4-methylthiazole: step 1/1. Catalyzes the phosphorylation of the hydroxyl group of 4-methyl-5-beta-hydroxyethylthiazole (THZ). The sequence is that of Hydroxyethylthiazole kinase 1 from Streptococcus pneumoniae (strain 70585).